Here is a 516-residue protein sequence, read N- to C-terminus: MSGVNSDLLHRSTLSVYNNLMDQFNPGLQKLVTLGNSYIKAFQALALTSEAYFSALAKMGEQALSTLSSRSLGDVLIQISETQRKLTAEAEGVFRWFHVEVLQAMDKNVKLDEEYIEGSRRVYELEVRNQAASLERQLRRGAFRDSLESSEYMQYLRQSQHEILKEEERRYRFLAEKHCGLTQSLLYLINKTGVSLQQRADGWKEKVSESRSSRPRTPTPLDQEAQLKSSVGSLLQTGDREMDREPLGRVPSRAPSPLPSRSRSSSVGESLGLGGGRSMRAIVSHPASSNPVLLPFARGDLLTVLIPEPRNGWLYGRHDPSLRQGWFPAAYVASTEDFLPVGLSISHRSHSMNNLLEPTSQSESDTQTYSEVSSPVVSMRRASADVRSVSPLPEKKTESNNELKSGQKVFHEIPAPATQLRRGSADVRSISPLPDRRAESHFESKVELKNYNELPPPAPPLPNSPLPERKTDLTSERPSTQGQPPEHPLFPRGSNPFATVKLRPTVTNDRSAPRIQ.

The region spanning 1–227 (MSGVNSDLLH…PTPLDQEAQL (227 aa)) is the IMD domain. A disordered region spans residues 200-273 (ADGWKEKVSE…SSSVGESLGL (74 aa)). The segment covering 201–212 (DGWKEKVSESRS) has biased composition (basic and acidic residues). A compositionally biased stretch (polar residues) spans 226 to 236 (QLKSSVGSLLQ). A compositionally biased stretch (basic and acidic residues) spans 238-247 (GDREMDREPL). Residues 249–270 (RVPSRAPSPLPSRSRSSSVGES) show a composition bias toward low complexity. The 64-residue stretch at 274–337 (GGGRSMRAIV…PAAYVASTED (64 aa)) folds into the SH3 domain. The segment covering 355–376 (LLEPTSQSESDTQTYSEVSSPV) has biased composition (polar residues). The tract at residues 355 to 516 (LLEPTSQSES…TNDRSAPRIQ (162 aa)) is disordered. Residues 434–450 (PDRRAESHFESKVELKN) show a composition bias toward basic and acidic residues. Residues 454 to 465 (LPPPAPPLPNSP) are compositionally biased toward pro residues.

It localises to the cell membrane. In terms of biological role, phosphoinositides-binding protein that induces the formation of planar or gently curved membrane structures. The chain is BAR/IMD domain-containing adapter protein 2-like 2 (baiap2l2) from Danio rerio (Zebrafish).